Consider the following 238-residue polypeptide: Cysteine-rich venom protein 1 (238 aa).

The N-terminal stretch at 1–19 (MIAFIVLLSLAAVLQQSSG) is a signal peptide. An SCP domain is found at 38–164 (VDKHNALRRS…STKYLYVCQY (127 aa)). 8 disulfides stabilise this stretch: C75–C153, C92–C165, C148–C162, C184–C191, C187–C196, C200–C233, C209–C227, and C218–C231. Residues 200–233 (CEYEDTFSNCKALAKKTKCKTEWIKSKCPATCFC) form the ShKT domain.

Belongs to the CRISP family. In terms of tissue distribution, expressed by the venom gland.

The protein localises to the secreted. Blocks contraction of smooth muscle elicited by high potassium-induced depolarization, but does not block caffeine-stimulated contraction. May target voltage-gated calcium channels on smooth muscle. This Hydrophis hardwickii (Hardwick's spine-bellied seasnake) protein is Cysteine-rich venom protein 1.